The following is a 134-amino-acid chain: UPF0412 protein YaaI (134 aa).

The N-terminal stretch at 1-23 (MRSVLTISVGLLFGLALSSVAHA) is a signal peptide.

This sequence belongs to the UPF0412 family.

This is UPF0412 protein YaaI from Salmonella paratyphi A (strain ATCC 9150 / SARB42).